Consider the following 119-residue polypeptide: MGKMHTSEMLKHVYDINLSYLLLAQRLISQDKPSAMFRLGISEEMATTLGGLTLPQMVKLAETNQLVCQFRFDSHQTITRLTQDSRVDDLQQIHTGILLSTRLLTEVSQTDEVARKKRA.

The protein belongs to the FlhD family. Homodimer; disulfide-linked. Forms a heterohexamer composed of two FlhC and four FlhD subunits. Each FlhC binds a FlhD dimer, forming a heterotrimer, and a hexamer assembles by dimerization of two heterotrimers.

Its subcellular location is the cytoplasm. Functions in complex with FlhC as a master transcriptional regulator that regulates transcription of several flagellar and non-flagellar operons by binding to their promoter region. Activates expression of class 2 flagellar genes, including fliA, which is a flagellum-specific sigma factor that turns on the class 3 genes. Also regulates genes whose products function in a variety of physiological pathways. This chain is Flagellar transcriptional regulator FlhD, found in Enterobacter sp. (strain 638).